Here is a 218-residue protein sequence, read N- to C-terminus: Ras-related protein Rab11E (218 aa).

Position 20–27 (20–27 (GDSGVGKS)) interacts with GTP. The Effector region signature appears at 42 to 50 (SKSTIGVEF). Residues 68–72 (DTAGQ) and 126–129 (NKSD) each bind GTP. S-geranylgeranyl cysteine attachment occurs at residues Cys215 and Cys216.

Belongs to the small GTPase superfamily. Rab family.

The protein localises to the cell membrane. The protein is Ras-related protein Rab11E (RAB11E) of Lotus japonicus (Lotus corniculatus var. japonicus).